We begin with the raw amino-acid sequence, 41 residues long: Putative toxic protein TimP (41 aa).

The segment at 1–17 is a transmembrane helix; the sequence is MKIRCFCIVLIVSGALL.

It belongs to the TimP toxin family.

The protein resides in the cell inner membrane. Putative toxic component of a potential type I toxin-antitoxin (TA) system. Neutralized by sRNA antitoxin TimR which binds to the 5' UTR of timP mRNA and inhibits translation. The antitoxin gene is encoded immediately upstream and transcribed divergently from the toxin gene; antitoxin RNA is less stable than timP mRNA. The polypeptide is Putative toxic protein TimP (Escherichia coli (strain K12)).